Reading from the N-terminus, the 419-residue chain is Histidine--tRNA ligase (419 aa).

This sequence belongs to the class-II aminoacyl-tRNA synthetase family. In terms of assembly, homodimer.

It is found in the cytoplasm. The enzyme catalyses tRNA(His) + L-histidine + ATP = L-histidyl-tRNA(His) + AMP + diphosphate + H(+). In Desulforamulus reducens (strain ATCC BAA-1160 / DSM 100696 / MI-1) (Desulfotomaculum reducens), this protein is Histidine--tRNA ligase.